The sequence spans 390 residues: S-adenosylmethionine synthase 1 (390 aa).

Glu-9 contributes to the Mg(2+) binding site. His-15 is a binding site for ATP. K(+) is bound at residue Glu-43. L-methionine is bound by residues Glu-56 and Gln-99. ATP contacts are provided by residues Asp-167–Lys-169, Ser-235–Phe-238, Asp-246, Arg-252–Lys-253, Ala-269, Lys-273, and Lys-277. Residue Asp-246 participates in L-methionine binding. Residue Lys-277 participates in L-methionine binding.

Belongs to the AdoMet synthase family. Homotetramer. The cofactor is Mn(2+). Mg(2+) serves as cofactor. Requires Co(2+) as cofactor. K(+) is required as a cofactor.

The protein localises to the cytoplasm. The catalysed reaction is L-methionine + ATP + H2O = S-adenosyl-L-methionine + phosphate + diphosphate. It participates in amino-acid biosynthesis; S-adenosyl-L-methionine biosynthesis; S-adenosyl-L-methionine from L-methionine: step 1/1. In terms of biological role, catalyzes the formation of S-adenosylmethionine from methionine and ATP. The reaction comprises two steps that are both catalyzed by the same enzyme: formation of S-adenosylmethionine (AdoMet) and triphosphate, and subsequent hydrolysis of the triphosphate. The protein is S-adenosylmethionine synthase 1 (SAM1) of Petunia hybrida (Petunia).